We begin with the raw amino-acid sequence, 390 residues long: Acetylornithine aminotransferase (390 aa).

Pyridoxal 5'-phosphate is bound by residues 105-106 and Phe-132; that span reads GA. Arg-135 is a binding site for N(2)-acetyl-L-ornithine. 217 to 220 is a binding site for pyridoxal 5'-phosphate; the sequence is DEVQ. An N6-(pyridoxal phosphate)lysine modification is found at Lys-246. Residue Ser-274 coordinates N(2)-acetyl-L-ornithine. Pyridoxal 5'-phosphate is bound at residue Thr-275.

Belongs to the class-III pyridoxal-phosphate-dependent aminotransferase family. ArgD subfamily. In terms of assembly, homodimer. Requires pyridoxal 5'-phosphate as cofactor.

Its subcellular location is the cytoplasm. It carries out the reaction N(2)-acetyl-L-ornithine + 2-oxoglutarate = N-acetyl-L-glutamate 5-semialdehyde + L-glutamate. Its pathway is amino-acid biosynthesis; L-arginine biosynthesis; N(2)-acetyl-L-ornithine from L-glutamate: step 4/4. In Methanothermobacter thermautotrophicus (strain ATCC 29096 / DSM 1053 / JCM 10044 / NBRC 100330 / Delta H) (Methanobacterium thermoautotrophicum), this protein is Acetylornithine aminotransferase.